We begin with the raw amino-acid sequence, 525 residues long: Putative ribose/galactose/methyl galactoside import ATP-binding protein (525 aa).

Residues 1 to 15 (MFGSATANPPAQRNL) are compositionally biased toward polar residues. The tract at residues 1–23 (MFGSATANPPAQRNLPSGDGDGG) is disordered. ABC transporter domains are found at residues 33 to 269 (LEIS…VGRE) and 279 to 523 (KPAG…SGHK). 65-72 (GENGAGKS) lines the ATP pocket.

This sequence belongs to the ABC transporter superfamily. Carbohydrate importer 2 (CUT2) (TC 3.A.1.2) family.

It is found in the cell inner membrane. The catalysed reaction is D-ribose(out) + ATP + H2O = D-ribose(in) + ADP + phosphate + H(+). It carries out the reaction D-galactose(out) + ATP + H2O = D-galactose(in) + ADP + phosphate + H(+). Its function is as follows. Part of an ABC transporter complex involved in carbohydrate import. Could be involved in ribose, galactose and/or methyl galactoside import. Responsible for energy coupling to the transport system. This chain is Putative ribose/galactose/methyl galactoside import ATP-binding protein, found in Pseudomonas syringae pv. syringae (strain B728a).